The chain runs to 300 residues: Nucleotide-binding protein Daci_5422 (300 aa).

ATP is bound at residue 10–17 (GMSGSGKS). 59–62 (DARS) lines the GTP pocket.

Belongs to the RapZ-like family.

In terms of biological role, displays ATPase and GTPase activities. This chain is Nucleotide-binding protein Daci_5422, found in Delftia acidovorans (strain DSM 14801 / SPH-1).